A 126-amino-acid polypeptide reads, in one-letter code: Histone H2B type 1-H (126 aa).

Residues 1–12 (MPDPAKSAPAPK) are compositionally biased toward low complexity. The interval 1–36 (MPDPAKSAPAPKKGSKKAVTKAQKKDGKKRKRSRKE) is disordered. N-acetylproline is present on Pro2. Lys6 is subject to N6-(2-hydroxyisobutyryl)lysine; alternate. N6-(beta-hydroxybutyryl)lysine; alternate is present on Lys6. N6-acetyllysine; alternate is present on Lys6. Lys6 carries the post-translational modification N6-butyryllysine; alternate. Position 6 is an N6-crotonyllysine; alternate (Lys6). Lys6 carries the post-translational modification N6-lactoyllysine; alternate. A Glycyl lysine isopeptide (Lys-Gly) (interchain with G-Cter in SUMO2); alternate cross-link involves residue Lys6. Ser7 carries the ADP-ribosylserine modification. Lys12 is modified (N6-(beta-hydroxybutyryl)lysine; alternate). 2 positions are modified to N6-acetyllysine; alternate: Lys12 and Lys13. Residues Lys12 and Lys13 each carry the N6-crotonyllysine; alternate modification. Lys12 is modified (N6-lactoyllysine; alternate). N6-(2-hydroxyisobutyryl)lysine; alternate is present on Lys13. Phosphoserine; by STK4/MST1 is present on Ser15. N6-acetyllysine; alternate occurs at positions 16, 17, 21, and 24. N6-crotonyllysine; alternate is present on residues Lys16, Lys17, Lys21, and Lys24. An N6-lactoyllysine; alternate mark is found at Lys16, Lys17, Lys21, and Lys24. N6-(beta-hydroxybutyryl)lysine; alternate occurs at positions 17 and 21. Lys17 bears the N6-glutaryllysine; alternate mark. Lys21 and Lys24 each carry N6-(2-hydroxyisobutyryl)lysine; alternate. The residue at position 21 (Lys21) is an N6-butyryllysine; alternate. Lys21 participates in a covalent cross-link: Glycyl lysine isopeptide (Lys-Gly) (interchain with G-Cter in SUMO2); alternate. Lys25 carries the post-translational modification N6-(2-hydroxyisobutyryl)lysine. Residue Lys35 is modified to N6-(2-hydroxyisobutyryl)lysine; alternate. Position 35 is an N6-(beta-hydroxybutyryl)lysine; alternate (Lys35). Lys35 bears the N6-crotonyllysine; alternate mark. Lys35 is modified (N6-glutaryllysine; alternate). Lys35 carries the N6-succinyllysine; alternate modification. A Glycyl lysine isopeptide (Lys-Gly) (interchain with G-Cter in ubiquitin); alternate cross-link involves residue Lys35. A PolyADP-ribosyl glutamic acid modification is found at Glu36. Ser37 bears the Phosphoserine; by AMPK mark. Residues Lys44, Lys47, and Lys58 each carry the N6-(2-hydroxyisobutyryl)lysine; alternate modification. Position 44 is an N6-lactoyllysine; alternate (Lys44). N6-glutaryllysine; alternate is present on residues Lys44 and Lys47. At Lys47 the chain carries N6-methyllysine; alternate. The residue at position 58 (Lys58) is an N6,N6-dimethyllysine; alternate. Arg80 carries the post-translational modification Dimethylated arginine. Lys86 is subject to N6-(2-hydroxyisobutyryl)lysine; alternate. Lys86 is subject to N6-(beta-hydroxybutyryl)lysine; alternate. Lys86 is modified (N6-acetyllysine; alternate). Lys86 bears the N6-lactoyllysine; alternate mark. Lys86 carries the N6,N6,N6-trimethyllysine; alternate modification. An omega-N-methylarginine mark is found at Arg87 and Arg93. Lys109 carries the N6-(2-hydroxyisobutyryl)lysine; alternate modification. Lys109 carries the N6-lactoyllysine; alternate modification. Lys109 bears the N6-glutaryllysine; alternate mark. Lys109 is subject to N6-methyllysine; alternate. The O-linked (GlcNAc) serine glycan is linked to Ser113. Thr116 carries the phosphothreonine modification. Lys117 and Lys121 each carry N6-(2-hydroxyisobutyryl)lysine; alternate. An N6-(beta-hydroxybutyryl)lysine; alternate mark is found at Lys117 and Lys121. N6-lactoyllysine; alternate is present on residues Lys117 and Lys121. Residues Lys117 and Lys121 each carry the N6-glutaryllysine; alternate modification. 2 positions are modified to N6-succinyllysine; alternate: Lys117 and Lys121. Lys117 carries the N6-malonyllysine; alternate modification. Lys117 is subject to N6-methylated lysine; alternate. Lys121 participates in a covalent cross-link: Glycyl lysine isopeptide (Lys-Gly) (interchain with G-Cter in ubiquitin); alternate.

Belongs to the histone H2B family. In terms of assembly, the nucleosome is a histone octamer containing two molecules each of H2A, H2B, H3 and H4 assembled in one H3-H4 heterotetramer and two H2A-H2B heterodimers. The octamer wraps approximately 147 bp of DNA. Found in a complex with PPAR9; DTX3L AND STAT1; the interaction is likely to induce DTX3L-mediated ubiquitination of H2BC9/H2BJ. Monoubiquitination at Lys-35 (H2BK34Ub) by the MSL1/MSL2 dimer is required for histone H3 'Lys-4' (H3K4me) and 'Lys-79' (H3K79me) methylation and transcription activation at specific gene loci, such as HOXA9 and MEIS1 loci. Similarly, monoubiquitination at Lys-121 (H2BK120Ub) by the RNF20/40 complex gives a specific tag for epigenetic transcriptional activation and is also prerequisite for histone H3 'Lys-4' and 'Lys-79' methylation. It also functions cooperatively with the FACT dimer to stimulate elongation by RNA polymerase II. H2BK120Ub also acts as a regulator of mRNA splicing: deubiquitination by USP49 is required for efficient cotranscriptional splicing of a large set of exons. Monoubiquitinated by DTX3L upon encephalomyocarditis virus (EMCV)-mediated infection. In terms of processing, phosphorylation at Ser-37 (H2BS36ph) by AMPK in response to stress promotes transcription. Phosphorylated on Ser-15 (H2BS14ph) by STK4/MST1 during apoptosis; which facilitates apoptotic chromatin condensation. Also phosphorylated on Ser-15 in response to DNA double strand breaks (DSBs), and in correlation with somatic hypermutation and immunoglobulin class-switch recombination. Post-translationally, glcNAcylation at Ser-113 promotes monoubiquitination of Lys-121. It fluctuates in response to extracellular glucose, and associates with transcribed genes. ADP-ribosylated by PARP1 or PARP2 on Ser-7 (H2BS6ADPr) in response to DNA damage. H2BS6ADPr promotes recruitment of CHD1L. Poly ADP-ribosylation on Glu-36 (H2BE35ADPr) by PARP1 regulates adipogenesis: it inhibits phosphorylation at Ser-37 (H2BS36ph), thereby blocking expression of pro-adipogenetic genes. In terms of processing, crotonylation (Kcr) is specifically present in male germ cells and marks testis-specific genes in post-meiotic cells, including X-linked genes that escape sex chromosome inactivation in haploid cells. Crotonylation marks active promoters and enhancers and confers resistance to transcriptional repressors. It is also associated with post-meiotically activated genes on autosomes. Post-translationally, lactylated in macrophages by EP300/P300 by using lactoyl-CoA directly derived from endogenous or exogenous lactate, leading to stimulates gene transcription.

Its subcellular location is the nucleus. It is found in the chromosome. Core component of nucleosome. Nucleosomes wrap and compact DNA into chromatin, limiting DNA accessibility to the cellular machineries which require DNA as a template. Histones thereby play a central role in transcription regulation, DNA repair, DNA replication and chromosomal stability. DNA accessibility is regulated via a complex set of post-translational modifications of histones, also called histone code, and nucleosome remodeling. The polypeptide is Histone H2B type 1-H (Homo sapiens (Human)).